Consider the following 292-residue polypeptide: MNKPFSCIGIVGHPRHPTALTTHEMLYRWLTAKGYQVIIEQQIARELKLEGVQTGTLAEIGRTADLAVVVGGDGNMLGAARVLARYDIKVIGINRGNLGFLTDLDPDNAQQQLADVLEGDYFVESRFLLEAQVCRQSGTPRIGTAINEVVLHPGKVAHMIEFEVYIDENFAFSQRSDGLIISTPTGSTAYSLSAGGPILTPSLDAIALVPMFPHTLSARPLVINSSSTIRLRFSHMRSDLEISCDSQIALPIQQSEDVLIRRSDYHLNLIHPKNYNYFNTLSSKLGWSKKLF.

D73 acts as the Proton acceptor in catalysis. Residues 73–74, 147–148, H158, R175, D177, 188–193, and Q247 each bind NAD(+); these read DG, NE, and TAYSLS.

It belongs to the NAD kinase family. Requires a divalent metal cation as cofactor.

It localises to the cytoplasm. It catalyses the reaction NAD(+) + ATP = ADP + NADP(+) + H(+). In terms of biological role, involved in the regulation of the intracellular balance of NAD and NADP, and is a key enzyme in the biosynthesis of NADP. Catalyzes specifically the phosphorylation on 2'-hydroxyl of the adenosine moiety of NAD to yield NADP. The chain is NAD kinase from Erwinia tasmaniensis (strain DSM 17950 / CFBP 7177 / CIP 109463 / NCPPB 4357 / Et1/99).